The following is a 285-amino-acid chain: Probable endonuclease 4 (285 aa).

Zn(2+) contacts are provided by His-69, His-109, Glu-145, Asp-179, His-182, His-216, Asp-229, His-231, and Glu-261.

Belongs to the AP endonuclease 2 family. It depends on Zn(2+) as a cofactor.

It carries out the reaction Endonucleolytic cleavage to 5'-phosphooligonucleotide end-products.. Its function is as follows. Endonuclease IV plays a role in DNA repair. It cleaves phosphodiester bonds at apurinic or apyrimidinic (AP) sites, generating a 3'-hydroxyl group and a 5'-terminal sugar phosphate. In Salmonella agona (strain SL483), this protein is Probable endonuclease 4.